A 208-amino-acid chain; its full sequence is RNA-binding protein KhpB (208 aa).

Residues threonine 5–valine 55 are jag_N domain. The region spanning isoleucine 58–alanine 135 is the KH domain. Residues leucine 140–arginine 208 enclose the R3H domain.

The protein belongs to the KhpB RNA-binding protein family. As to quaternary structure, forms a complex with KhpA.

The protein localises to the cytoplasm. In terms of biological role, a probable RNA chaperone. Forms a complex with KhpA which binds to cellular RNA and controls its expression. Plays a role in peptidoglycan (PG) homeostasis and cell length regulation. This chain is RNA-binding protein KhpB, found in Bacillus subtilis (strain 168).